A 505-amino-acid polypeptide reads, in one-letter code: Glycerol kinase (505 aa).

Thr12 contacts ADP. Thr12, Thr13, and Ser14 together coordinate ATP. A sn-glycerol 3-phosphate-binding site is contributed by Thr12. Arg16 is a binding site for ADP. Arg82, Glu83, Tyr134, and Asp249 together coordinate sn-glycerol 3-phosphate. Glycerol is bound by residues Arg82, Glu83, Tyr134, Asp249, and Gln250. Thr271 and Gly315 together coordinate ADP. ATP contacts are provided by Thr271, Gly315, Gln319, and Gly416. 2 residues coordinate ADP: Gly416 and Asn420.

Belongs to the FGGY kinase family.

It carries out the reaction glycerol + ATP = sn-glycerol 3-phosphate + ADP + H(+). It functions in the pathway polyol metabolism; glycerol degradation via glycerol kinase pathway; sn-glycerol 3-phosphate from glycerol: step 1/1. Inhibited by fructose 1,6-bisphosphate (FBP). Its function is as follows. Key enzyme in the regulation of glycerol uptake and metabolism. Catalyzes the phosphorylation of glycerol to yield sn-glycerol 3-phosphate. The protein is Glycerol kinase of Mycolicibacterium vanbaalenii (strain DSM 7251 / JCM 13017 / BCRC 16820 / KCTC 9966 / NRRL B-24157 / PYR-1) (Mycobacterium vanbaalenii).